Reading from the N-terminus, the 280-residue chain is MAAAAPPAGPGLYSDIGKKARDLLYRDYHTDQKFTLTTYAANGAAITVAGTKKNESIFSEIQSQVKNNNVSVDVKATSDSKLITTFTVHDLGTPGLKGILSIPFPYQKSAKAEVQYLHPHAGLNAIVGLNANPLVSFSGVFGTGAFAVGTDVAFDTATGDFTKYNAGLSHTTPDLTAALLLNNKGDSLAASYYHKVSKTSAVGAELAHSFSSNENTLTFGTQHALDELTTVKARFNNFGMASALIQHEFRPKSLVTISTEVDTKAIDKSSKVGLSLVLKP.

Belongs to the eukaryotic mitochondrial porin (TC 1.B.8.1) family. Expressed in roots, stems, leaves, palea, lemma and pollen.

Its subcellular location is the mitochondrion outer membrane. Forms a channel through the mitochondrial outer membrane that allows diffusion of small hydrophilic molecules. The channel adopts an open conformation at low or zero membrane potential and a closed conformation at potentials above 30-40 mV. The open state has a weak anion selectivity whereas the closed state is cation-selective. The sequence is that of Mitochondrial outer membrane protein porin 2 (VDAC2) from Oryza sativa subsp. japonica (Rice).